We begin with the raw amino-acid sequence, 41 residues long: Conotoxin Bu22 (41 aa).

The propeptide occupies 1-25; that stretch reads SDRASDGRNAAANDRASDLVALTVR. Disulfide bonds link cysteine 27/cysteine 33 and cysteine 28/cysteine 40.

This sequence belongs to the conotoxin A superfamily. In terms of tissue distribution, expressed by the venom duct.

The protein resides in the secreted. The sequence is that of Conotoxin Bu22 from Conus bullatus (Bubble cone).